The following is a 281-amino-acid chain: Predicted GPI-anchored protein 39 (281 aa).

The signal sequence occupies residues 1-18 (MKATTFTLLLSIATAINA). Disordered stretches follow at residues 52–94 (HHHG…SASV) and 106–227 (VSVS…SSSE). Low complexity-rich tracts occupy residues 69 to 94 (SSSSVSESTVEELSTTTTTESVSASV), 106 to 158 (VSVS…STTD), 167 to 203 (ATDSVETTFESVSNTEDLSSSSSSIITDSSESTIEET), and 210 to 227 (SVPSSLSEEYSTSGSSSE). N-linked (GlcNAc...) asparagine glycosylation is present at N150. N-linked (GlcNAc...) asparagine glycans are attached at residues N239, N246, N249, and N252. S256 carries the GPI-anchor amidated serine lipid modification. A propeptide spans 257–281 (ANFAIQYGTDYGVAVVAAIVGALLI) (removed in mature form).

The protein localises to the cell membrane. This Candida albicans (strain SC5314 / ATCC MYA-2876) (Yeast) protein is Predicted GPI-anchored protein 39 (PGA39).